A 189-amino-acid chain; its full sequence is Xanthine phosphoribosyltransferase (189 aa).

Xanthine-binding residues include Leu-20 and Asn-27. Position 128-132 (128-132 (ANGEA)) interacts with 5-phospho-alpha-D-ribose 1-diphosphate. Lys-156 provides a ligand contact to xanthine.

Belongs to the purine/pyrimidine phosphoribosyltransferase family. Xpt subfamily. As to quaternary structure, homodimer.

The protein localises to the cytoplasm. It carries out the reaction XMP + diphosphate = xanthine + 5-phospho-alpha-D-ribose 1-diphosphate. The protein operates within purine metabolism; XMP biosynthesis via salvage pathway; XMP from xanthine: step 1/1. Its function is as follows. Converts the preformed base xanthine, a product of nucleic acid breakdown, to xanthosine 5'-monophosphate (XMP), so it can be reused for RNA or DNA synthesis. In Lactobacillus delbrueckii subsp. bulgaricus (strain ATCC 11842 / DSM 20081 / BCRC 10696 / JCM 1002 / NBRC 13953 / NCIMB 11778 / NCTC 12712 / WDCM 00102 / Lb 14), this protein is Xanthine phosphoribosyltransferase.